A 330-amino-acid chain; its full sequence is Peptide transport system ATP-binding protein SapD (330 aa).

The region spanning 6-259 (IRNLTIEFKT…PHHPYTQALI (254 aa)) is the ABC transporter domain. Residue 40–47 (GESGSGKS) coordinates ATP.

The protein belongs to the ABC transporter superfamily.

The protein resides in the cell inner membrane. Involved in a peptide intake transport system that plays a role in the resistance to antimicrobial peptides. The chain is Peptide transport system ATP-binding protein SapD (sapD) from Escherichia coli O157:H7.